We begin with the raw amino-acid sequence, 198 residues long: Holliday junction branch migration complex subunit RuvA (198 aa).

The domain I stretch occupies residues 1–61 (MYEYFEGIIQ…DNDQTLYGFE (61 aa)). The tract at residues 62 to 140 (GAADKRTFNQ…TDGQPAAAAI (79 aa)) is domain II. The tract at residues 141 to 145 (APVAS) is flexible linker. Residues 146-198 (DVDSELADALAALVALGYPQRTVDGLTDTLKAFSAKTTDAYLREGLRLLSGKA) form a domain III region.

This sequence belongs to the RuvA family. In terms of assembly, homotetramer. Forms an RuvA(8)-RuvB(12)-Holliday junction (HJ) complex. HJ DNA is sandwiched between 2 RuvA tetramers; dsDNA enters through RuvA and exits via RuvB. An RuvB hexamer assembles on each DNA strand where it exits the tetramer. Each RuvB hexamer is contacted by two RuvA subunits (via domain III) on 2 adjacent RuvB subunits; this complex drives branch migration. In the full resolvosome a probable DNA-RuvA(4)-RuvB(12)-RuvC(2) complex forms which resolves the HJ.

Its subcellular location is the cytoplasm. In terms of biological role, the RuvA-RuvB-RuvC complex processes Holliday junction (HJ) DNA during genetic recombination and DNA repair, while the RuvA-RuvB complex plays an important role in the rescue of blocked DNA replication forks via replication fork reversal (RFR). RuvA specifically binds to HJ cruciform DNA, conferring on it an open structure. The RuvB hexamer acts as an ATP-dependent pump, pulling dsDNA into and through the RuvAB complex. HJ branch migration allows RuvC to scan DNA until it finds its consensus sequence, where it cleaves and resolves the cruciform DNA. The sequence is that of Holliday junction branch migration complex subunit RuvA from Lacticaseibacillus casei (strain BL23) (Lactobacillus casei).